The chain runs to 416 residues: Glyceraldehyde-3-phosphate dehydrogenase, chloroplastic (416 aa).

The transit peptide at 1–78 (MAFVAPVSSV…APARTSNAPS (78 aa)) directs the protein to the chloroplast. NADP(+) is bound by residues 90-91 (RI), D114, and R158. Residues 232–234 (SCT), T263, R278, 291–292 (TG), and R314 contribute to the D-glyceraldehyde 3-phosphate site. C233 serves as the catalytic Nucleophile. N396 contacts NADP(+).

Belongs to the glyceraldehyde-3-phosphate dehydrogenase family. Homotetramer.

It localises to the plastid. The protein resides in the chloroplast. It carries out the reaction D-glyceraldehyde 3-phosphate + phosphate + NADP(+) = (2R)-3-phospho-glyceroyl phosphate + NADPH + H(+). It functions in the pathway carbohydrate biosynthesis; Calvin cycle. The chain is Glyceraldehyde-3-phosphate dehydrogenase, chloroplastic (GAPA) from Gracilaria gracilis (Red alga).